We begin with the raw amino-acid sequence, 253 residues long: Indole-3-glycerol phosphate synthase (253 aa).

Belongs to the TrpC family.

The catalysed reaction is 1-(2-carboxyphenylamino)-1-deoxy-D-ribulose 5-phosphate + H(+) = (1S,2R)-1-C-(indol-3-yl)glycerol 3-phosphate + CO2 + H2O. The protein operates within amino-acid biosynthesis; L-tryptophan biosynthesis; L-tryptophan from chorismate: step 4/5. In Bacillus cereus (strain G9842), this protein is Indole-3-glycerol phosphate synthase.